A 218-amino-acid polypeptide reads, in one-letter code: Protein-methionine-sulfoxide reductase heme-binding subunit MsrQ (218 aa).

The next 5 helical transmembrane spans lie at 14 to 34 (AVHA…WQVW), 60 to 80 (LLLI…AVLI), 86 to 106 (LGLY…WLDL), 121 to 141 (PYIT…ITST), and 155 to 175 (LHML…WLVK).

This sequence belongs to the MsrQ family. In terms of assembly, heterodimer of a catalytic subunit (MsrP) and a heme-binding subunit (MsrQ). FMN is required as a cofactor. It depends on heme b as a cofactor.

The protein resides in the cell inner membrane. Its function is as follows. Part of the MsrPQ system that repairs oxidized periplasmic proteins containing methionine sulfoxide residues (Met-O), using respiratory chain electrons. Thus protects these proteins from oxidative-stress damage caused by reactive species of oxygen and chlorine generated by the host defense mechanisms. MsrPQ is essential for the maintenance of envelope integrity under bleach stress, rescuing a wide series of structurally unrelated periplasmic proteins from methionine oxidation. MsrQ provides electrons for reduction to the reductase catalytic subunit MsrP, using the quinone pool of the respiratory chain. The chain is Protein-methionine-sulfoxide reductase heme-binding subunit MsrQ from Xanthomonas campestris pv. campestris (strain 8004).